We begin with the raw amino-acid sequence, 421 residues long: Core-capsid bridging protein (421 aa).

Belongs to the adenoviridae core-capsid bridging protein family. In terms of assembly, monomer. Homodimer. Exists in equilibrium between monomers and dimers in solution. Interacts with the histone-like nucleoprotein; this interactions bridge the virus core to the capsid. Interacts with core protein X; this interactions bridge the virus core to the capsid. Interacts with the endosome lysis protein VI; this interactions bridge the virus core to the capsid. Interacts with the peripentonal hexons. Interacts with host NPM1; this interaction might play a role in virus assembly.

Its subcellular location is the virion. The protein localises to the host nucleus. It is found in the host nucleolus. Associates loosely with the viral DNA to form an outer shell around the nucleoprotein-DNA complex and links it with the capsid by binding the endosome lysis protein. Dissociates from the viral genome during entry. Might be involved in nuclear capsid assembly of the viral particles through its association with NPM1/nucleophosmin. This Canine adenovirus serotype 1 (strain RI261) (CAdV-1) protein is Core-capsid bridging protein.